A 322-amino-acid chain; its full sequence is 4-hydroxy-3-methylbut-2-enyl diphosphate reductase (322 aa).

Cys15 contributes to the [4Fe-4S] cluster binding site. Residues His44 and His77 each coordinate (2E)-4-hydroxy-3-methylbut-2-enyl diphosphate. The dimethylallyl diphosphate site is built by His44 and His77. Isopentenyl diphosphate contacts are provided by His44 and His77. Cys99 is a binding site for [4Fe-4S] cluster. His127 serves as a coordination point for (2E)-4-hydroxy-3-methylbut-2-enyl diphosphate. Position 127 (His127) interacts with dimethylallyl diphosphate. Position 127 (His127) interacts with isopentenyl diphosphate. Catalysis depends on Glu129, which acts as the Proton donor. A (2E)-4-hydroxy-3-methylbut-2-enyl diphosphate-binding site is contributed by Thr168. Cys198 contributes to the [4Fe-4S] cluster binding site. Positions 226, 227, 228, and 270 each coordinate (2E)-4-hydroxy-3-methylbut-2-enyl diphosphate. Dimethylallyl diphosphate-binding residues include Ser226, Ser227, Asn228, and Ser270. The isopentenyl diphosphate site is built by Ser226, Ser227, Asn228, and Ser270.

The protein belongs to the IspH family. Requires [4Fe-4S] cluster as cofactor.

The enzyme catalyses isopentenyl diphosphate + 2 oxidized [2Fe-2S]-[ferredoxin] + H2O = (2E)-4-hydroxy-3-methylbut-2-enyl diphosphate + 2 reduced [2Fe-2S]-[ferredoxin] + 2 H(+). It carries out the reaction dimethylallyl diphosphate + 2 oxidized [2Fe-2S]-[ferredoxin] + H2O = (2E)-4-hydroxy-3-methylbut-2-enyl diphosphate + 2 reduced [2Fe-2S]-[ferredoxin] + 2 H(+). Its pathway is isoprenoid biosynthesis; dimethylallyl diphosphate biosynthesis; dimethylallyl diphosphate from (2E)-4-hydroxy-3-methylbutenyl diphosphate: step 1/1. The protein operates within isoprenoid biosynthesis; isopentenyl diphosphate biosynthesis via DXP pathway; isopentenyl diphosphate from 1-deoxy-D-xylulose 5-phosphate: step 6/6. In terms of biological role, catalyzes the conversion of 1-hydroxy-2-methyl-2-(E)-butenyl 4-diphosphate (HMBPP) into a mixture of isopentenyl diphosphate (IPP) and dimethylallyl diphosphate (DMAPP). Acts in the terminal step of the DOXP/MEP pathway for isoprenoid precursor biosynthesis. The sequence is that of 4-hydroxy-3-methylbut-2-enyl diphosphate reductase from Neisseria meningitidis serogroup C (strain 053442).